A 531-amino-acid chain; its full sequence is T-complex protein 1 subunit zeta (531 aa).

N-acetylalanine is present on alanine 2. Lysine 5 carries the N6-acetyllysine modification. Residue glycine 39 participates in ADP binding. Glycine 39 provides a ligand contact to ATP. Position 90 (aspartate 90) interacts with Mg(2+). The ADP site is built by glycine 91, threonine 92, threonine 93, serine 94, threonine 158, and lysine 159. The ATP site is built by glycine 91, threonine 92, and threonine 93. Position 199 is an N6-acetyllysine (lysine 199). Serine 205 carries the post-translational modification Phosphoserine. A Glycyl lysine isopeptide (Lys-Gly) (interchain with G-Cter in SUMO2) cross-link involves residue lysine 251. Residues lysine 287, lysine 365, lysine 377, and lysine 388 each carry the N6-acetyllysine modification. Alanine 411 lines the ADP pocket. The ATP site is built by alanine 411, glycine 412, aspartate 496, and lysine 501. Position 496 (aspartate 496) interacts with ADP.

The protein belongs to the TCP-1 chaperonin family. Component of the chaperonin-containing T-complex (TRiC), a hexadecamer composed of two identical back-to-back stacked rings enclosing a protein folding chamber. Each ring is made up of eight different subunits: TCP1/CCT1, CCT2, CCT3, CCT4, CCT5, CCT6A/CCT6, CCT7, CCT8. Interacts with PACRG.

It is found in the cytoplasm. The catalysed reaction is ATP + H2O = ADP + phosphate + H(+). Its function is as follows. Component of the chaperonin-containing T-complex (TRiC), a molecular chaperone complex that assists the folding of actin, tubulin and other proteins upon ATP hydrolysis. The TRiC complex mediates the folding of WRAP53/TCAB1, thereby regulating telomere maintenance. The sequence is that of T-complex protein 1 subunit zeta (CCT6A) from Homo sapiens (Human).